The following is a 277-amino-acid chain: Urease accessory protein UreD (277 aa).

Belongs to the UreD family. In terms of assembly, ureD, UreF and UreG form a complex that acts as a GTP-hydrolysis-dependent molecular chaperone, activating the urease apoprotein by helping to assemble the nickel containing metallocenter of UreC. The UreE protein probably delivers the nickel.

The protein resides in the cytoplasm. In terms of biological role, required for maturation of urease via the functional incorporation of the urease nickel metallocenter. This Pseudomonas putida (strain ATCC 47054 / DSM 6125 / CFBP 8728 / NCIMB 11950 / KT2440) protein is Urease accessory protein UreD.